A 180-amino-acid polypeptide reads, in one-letter code: MTTSRRPSPRIRSFVKDLSATIPGAFRFTRGHYSMEELAREAIIRGADRIVVVGERRGNPGIIRVYAVEGPERPDNIVSFIVKGVSLSRERRWGLPSLRGGEVLVARPLDSGVAVEFADAFVIAFHARLKPPEAAGYVEAVIESLDARTVAVTFRYGGAPVGPMLRLGKPAEMVKRGRRV.

The Brix domain occupies Met1–Arg178.

Its function is as follows. Probably involved in the biogenesis of the ribosome. This Aeropyrum pernix (strain ATCC 700893 / DSM 11879 / JCM 9820 / NBRC 100138 / K1) protein is Probable Brix domain-containing ribosomal biogenesis protein.